The following is a 296-amino-acid chain: Diaminopimelate epimerase (296 aa).

Positions 11 and 78 each coordinate substrate. Cysteine 87 functions as the Proton donor in the catalytic mechanism. Substrate contacts are provided by residues 88-89 (GN), asparagine 167, asparagine 203, and 221-222 (ER). Residue cysteine 230 is the Proton acceptor of the active site. 231 to 232 (GT) lines the substrate pocket.

The protein belongs to the diaminopimelate epimerase family. In terms of assembly, homodimer.

The protein localises to the cytoplasm. The enzyme catalyses (2S,6S)-2,6-diaminopimelate = meso-2,6-diaminopimelate. It functions in the pathway amino-acid biosynthesis; L-lysine biosynthesis via DAP pathway; DL-2,6-diaminopimelate from LL-2,6-diaminopimelate: step 1/1. Its function is as follows. Catalyzes the stereoinversion of LL-2,6-diaminopimelate (L,L-DAP) to meso-diaminopimelate (meso-DAP), a precursor of L-lysine and an essential component of the bacterial peptidoglycan. This chain is Diaminopimelate epimerase, found in Mycobacterium leprae (strain Br4923).